We begin with the raw amino-acid sequence, 97 residues long: Aspartyl/glutamyl-tRNA(Asn/Gln) amidotransferase subunit C (97 aa).

Belongs to the GatC family. In terms of assembly, heterotrimer of A, B and C subunits.

It carries out the reaction L-glutamyl-tRNA(Gln) + L-glutamine + ATP + H2O = L-glutaminyl-tRNA(Gln) + L-glutamate + ADP + phosphate + H(+). It catalyses the reaction L-aspartyl-tRNA(Asn) + L-glutamine + ATP + H2O = L-asparaginyl-tRNA(Asn) + L-glutamate + ADP + phosphate + 2 H(+). Allows the formation of correctly charged Asn-tRNA(Asn) or Gln-tRNA(Gln) through the transamidation of misacylated Asp-tRNA(Asn) or Glu-tRNA(Gln) in organisms which lack either or both of asparaginyl-tRNA or glutaminyl-tRNA synthetases. The reaction takes place in the presence of glutamine and ATP through an activated phospho-Asp-tRNA(Asn) or phospho-Glu-tRNA(Gln). The protein is Aspartyl/glutamyl-tRNA(Asn/Gln) amidotransferase subunit C of Sulfolobus acidocaldarius (strain ATCC 33909 / DSM 639 / JCM 8929 / NBRC 15157 / NCIMB 11770).